The sequence spans 641 residues: 1-deoxy-D-xylulose-5-phosphate synthase (641 aa).

Thiamine diphosphate-binding positions include His-79 and 120–122 (AHS). Residue Asp-151 participates in Mg(2+) binding. Thiamine diphosphate-binding positions include 152 to 153 (GS), Asn-180, Tyr-290, and Glu-372. Asn-180 serves as a coordination point for Mg(2+).

Belongs to the transketolase family. DXPS subfamily. In terms of assembly, homodimer. Mg(2+) is required as a cofactor. Requires thiamine diphosphate as cofactor.

It catalyses the reaction D-glyceraldehyde 3-phosphate + pyruvate + H(+) = 1-deoxy-D-xylulose 5-phosphate + CO2. Its pathway is metabolic intermediate biosynthesis; 1-deoxy-D-xylulose 5-phosphate biosynthesis; 1-deoxy-D-xylulose 5-phosphate from D-glyceraldehyde 3-phosphate and pyruvate: step 1/1. Catalyzes the acyloin condensation reaction between C atoms 2 and 3 of pyruvate and glyceraldehyde 3-phosphate to yield 1-deoxy-D-xylulose-5-phosphate (DXP). The sequence is that of 1-deoxy-D-xylulose-5-phosphate synthase from Rhodopseudomonas palustris (strain BisB18).